The following is a 456-amino-acid chain: Chromosomal replication initiator protein DnaA (456 aa).

The tract at residues 1 to 83 is domain I, interacts with DnaA modulators; that stretch reads MTASLWQQCL…LRFDIGNRPH (83 aa). Positions 83–119 are domain II; it reads HPVAVARAPARGADPVNNSQKSWESKAEAKPEPNHKS. Positions 92-122 are disordered; sequence ARGADPVNNSQKSWESKAEAKPEPNHKSNTN. The span at 105–117 shows a compositional bias: basic and acidic residues; sequence WESKAEAKPEPNH. The tract at residues 120-336 is domain III, AAA+ region; it reads NTNVNYTFEN…GALNRVIANA (217 aa). Residues G164, G166, K167, and T168 each coordinate ATP. The segment at 337–456 is domain IV, binds dsDNA; the sequence is NFTGRAINID…YSNLIRTLSS (120 aa).

This sequence belongs to the DnaA family. In terms of assembly, oligomerizes as a right-handed, spiral filament on DNA at oriC.

It localises to the cytoplasm. Plays an essential role in the initiation and regulation of chromosomal replication. ATP-DnaA binds to the origin of replication (oriC) to initiate formation of the DNA replication initiation complex once per cell cycle. Binds the DnaA box (a 9 base pair repeat at the origin) and separates the double-stranded (ds)DNA. Forms a right-handed helical filament on oriC DNA; dsDNA binds to the exterior of the filament while single-stranded (ss)DNA is stabiized in the filament's interior. The ATP-DnaA-oriC complex binds and stabilizes one strand of the AT-rich DNA unwinding element (DUE), permitting loading of DNA polymerase. After initiation quickly degrades to an ADP-DnaA complex that is not apt for DNA replication. Binds acidic phospholipids. This chain is Chromosomal replication initiator protein DnaA, found in Aeromonas hydrophila subsp. hydrophila (strain ATCC 7966 / DSM 30187 / BCRC 13018 / CCUG 14551 / JCM 1027 / KCTC 2358 / NCIMB 9240 / NCTC 8049).